The primary structure comprises 78 residues: Putative Fe(2+) transport protein A (78 aa).

It belongs to the FeoA family.

Might be involved in Fe(2+) ion uptake. The chain is Putative Fe(2+) transport protein A from Helicobacter pylori (strain J99 / ATCC 700824) (Campylobacter pylori J99).